The following is a 272-amino-acid chain: Streptomycin 3''-kinase (272 aa).

The active-site Proton acceptor is Asp-190.

It belongs to the aminoglycoside phosphotransferase family.

It catalyses the reaction streptomycin + ATP = streptomycin 3''-phosphate + ADP + H(+). Its function is as follows. The aminoglycoside phosphotransferases achieve inactivation of their antibiotic substrates by phosphorylation. The polypeptide is Streptomycin 3''-kinase (aphE) (Streptomyces griseus).